Here is a 65-residue protein sequence, read N- to C-terminus: Large ribosomal subunit protein bL33 (65 aa).

The interval 20 to 42 (APASEKRSPGVSRYTTEKNRRNT) is disordered.

Belongs to the bacterial ribosomal protein bL33 family.

This chain is Large ribosomal subunit protein bL33, found in Prochlorococcus marinus (strain SARG / CCMP1375 / SS120).